An 89-amino-acid polypeptide reads, in one-letter code: Small ribosomal subunit protein uS15 (89 aa).

Residues 1-23 (MSLDTTEKQQLINANQTHGTDTG) are disordered. Over residues 8–23 (KQQLINANQTHGTDTG) the composition is skewed to polar residues.

It belongs to the universal ribosomal protein uS15 family. As to quaternary structure, part of the 30S ribosomal subunit. Forms a bridge to the 50S subunit in the 70S ribosome, contacting the 23S rRNA.

Functionally, one of the primary rRNA binding proteins, it binds directly to 16S rRNA where it helps nucleate assembly of the platform of the 30S subunit by binding and bridging several RNA helices of the 16S rRNA. Forms an intersubunit bridge (bridge B4) with the 23S rRNA of the 50S subunit in the ribosome. In Prochlorococcus marinus (strain MIT 9313), this protein is Small ribosomal subunit protein uS15.